A 49-amino-acid polypeptide reads, in one-letter code: Large ribosomal subunit protein bL36 (49 aa).

Belongs to the bacterial ribosomal protein bL36 family.

This chain is Large ribosomal subunit protein bL36, found in Pseudomonas fluorescens (strain ATCC BAA-477 / NRRL B-23932 / Pf-5).